The following is a 343-amino-acid chain: MNKILIRNFCTNIKNESTKPLIDNIYKNILKDNFKIVEIKDCKNNRGLFYNPIESPTQTLSVINPKTNKPNLIFKEEPFISYPSIIKSNENICNHCLKEIKKEEEEIKQECEECKVYKYCSIECKEKSSIEYHSVLCKSTGSGFNYLEKHASIEKRRFPLLAGKILARMIMGYHLEKSSKSTWLPLQMLSFAKKPPPLEWKDDYLIFSRSLLKGINNESMKKKFDYDWFVRVMQILYLNTIGIDIDPNQQSTKMSSPESGIGLYLLTSFINHDCDPNAFIHFPDDHTMHLSPLKPINPGDEITISYTDTTKDLVDRRSQLFENYGFNCECKKCLNDLLIKRNK.

Positions 77–307 (EPFISYPSII…PGDEITISYT (231 aa)) constitute an SET domain. C93, C96, C111, C114, C120, C124, H133, and C137 together coordinate Zn(2+). Residues 93–137 (CNHCLKEIKKEEEEIKQECEECKVYKYCSIECKEKSSIEYHSVLC) form an MYND-type zinc finger.

Belongs to the class V-like SAM-binding methyltransferase superfamily.

In terms of biological role, probable methyltransferase. The chain is SET and MYND domain-containing protein DDB_G0292454 from Dictyostelium discoideum (Social amoeba).